The chain runs to 174 residues: Mytilin-3 (174 aa).

An N-terminal signal peptide occupies residues 1-16 (MLKGIILIVTIQLVNA).

Component of the organic matrix of calcified shell layers like nacre and prisms.

It is found in the secreted. The sequence is that of Mytilin-3 from Mytilus californianus (California mussel).